Here is a 911-residue protein sequence, read N- to C-terminus: Eukaryotic translation initiation factor 3 subunit C (911 aa).

A disordered region spans residues 1-44; it reads MSRFFTTGSDSESESSLSGEELVTKPVSGNYGKQPLLLSEDEED. Over residues 8-21 the composition is skewed to low complexity; the sequence is GSDSESESSLSGEE. 7 positions are modified to phosphoserine: Ser-9, Ser-11, Ser-13, Ser-15, Ser-16, Ser-18, and Ser-39. Position 99 is an N6-acetyllysine (Lys-99). Disordered stretches follow at residues 157-299 and 520-540; these read TNYK…GGEW and QLTP…NEGE. Ser-166, Ser-178, Ser-181, and Ser-182 each carry phosphoserine. The segment covering 166-190 has biased composition (acidic residues); sequence SADEDAEKNEEDSEGSSDEDEDEDG. Positions 199–208 are enriched in basic and acidic residues; sequence KKQESSGESR. Acidic residues predominate over residues 216–230; the sequence is DDDEDSEDSEDEEWD. The span at 259-276 shows a compositional bias: basic and acidic residues; the sequence is PTTEEDKKAAEKKREDKA. Over residues 520–529 the composition is skewed to polar residues; sequence QLTPPEGSSK. Thr-522 is modified (phosphothreonine). Lys-641 carries the N6-acetyllysine modification. Positions 671 to 847 constitute a PCI domain; it reads FHLHINLELL…QTVVMHRTEP (177 aa). Residues 883 to 911 are disordered; that stretch reads FRDQKDGYRKNEGYMRRGGYRQQQSQTAY. The span at 884-897 shows a compositional bias: basic and acidic residues; that stretch reads RDQKDGYRKNEGYM. Phosphoserine is present on Ser-907.

This sequence belongs to the eIF-3 subunit C family. Component of the eukaryotic translation initiation factor 3 (eIF-3) complex, which is composed of 13 subunits: EIF3A, EIF3B, EIF3C, EIF3D, EIF3E, EIF3F, EIF3G, EIF3H, EIF3I, EIF3J, EIF3K, EIF3L and EIF3M. The eIF-3 complex appears to include 3 stable modules: module A is composed of EIF3A, EIF3B, EIF3G and EIF3I; module B is composed of EIF3F, EIF3H, and EIF3M; and module C is composed of EIF3C, EIF3D, EIF3E, EIF3K and EIF3L. EIF3C of module C binds EIF3B of module A and EIF3H of module B, thereby linking the three modules. EIF3J is a labile subunit that binds to the eIF-3 complex via EIF3B. The eIF-3 complex may interact with RPS6KB1 under conditions of nutrient depletion. Mitogenic stimulation may lead to binding and activation of a complex composed of MTOR and RPTOR, leading to phosphorylation and release of RPS6KB1 and binding of EIF4B to eIF-3. Interacts with ALKBH4, IFIT1 and IFIT2. Interacts with BZW2/5MP1. Phosphorylated. Phosphorylation is enhanced upon serum stimulation.

It localises to the cytoplasm. Its function is as follows. Component of the eukaryotic translation initiation factor 3 (eIF-3) complex, which is required for several steps in the initiation of protein synthesis. The eIF-3 complex associates with the 40S ribosome and facilitates the recruitment of eIF-1, eIF-1A, eIF-2:GTP:methionyl-tRNAi and eIF-5 to form the 43S pre-initiation complex (43S PIC). The eIF-3 complex stimulates mRNA recruitment to the 43S PIC and scanning of the mRNA for AUG recognition. The eIF-3 complex is also required for disassembly and recycling of post-termination ribosomal complexes and subsequently prevents premature joining of the 40S and 60S ribosomal subunits prior to initiation. The eIF-3 complex specifically targets and initiates translation of a subset of mRNAs involved in cell proliferation, including cell cycling, differentiation and apoptosis, and uses different modes of RNA stem-loop binding to exert either translational activation or repression. The chain is Eukaryotic translation initiation factor 3 subunit C (Eif3c) from Mus musculus (Mouse).